The sequence spans 98 residues: NADH-ubiquinone oxidoreductase chain 4L (98 aa).

3 helical membrane-spanning segments follow: residues 1–21, 29–49, and 61–81; these read MSMV…GLLM, SLLC…ATIL, and IILL…LVTV.

Belongs to the complex I subunit 4L family. As to quaternary structure, core subunit of respiratory chain NADH dehydrogenase (Complex I) which is composed of 45 different subunits.

The protein localises to the mitochondrion inner membrane. It catalyses the reaction a ubiquinone + NADH + 5 H(+)(in) = a ubiquinol + NAD(+) + 4 H(+)(out). Its function is as follows. Core subunit of the mitochondrial membrane respiratory chain NADH dehydrogenase (Complex I) which catalyzes electron transfer from NADH through the respiratory chain, using ubiquinone as an electron acceptor. Part of the enzyme membrane arm which is embedded in the lipid bilayer and involved in proton translocation. This is NADH-ubiquinone oxidoreductase chain 4L (MT-ND4L) from Pusa caspica (Caspian seal).